Here is a 367-residue protein sequence, read N- to C-terminus: tRNA-specific 2-thiouridylase MnmA (367 aa).

ATP is bound by residues 12–19 (GMSGGVDS) and Met-38. An interaction with target base in tRNA region spans residues 98 to 100 (NPD). Catalysis depends on Cys-103, which acts as the Nucleophile. An intrachain disulfide couples Cys-103 to Cys-200. Residue Gly-128 participates in ATP binding. The segment at 150-152 (KDQ) is interaction with tRNA. The active-site Cysteine persulfide intermediate is the Cys-200. The interaction with tRNA stretch occupies residues 312 to 313 (RY).

It belongs to the MnmA/TRMU family.

It is found in the cytoplasm. It catalyses the reaction S-sulfanyl-L-cysteinyl-[protein] + uridine(34) in tRNA + AH2 + ATP = 2-thiouridine(34) in tRNA + L-cysteinyl-[protein] + A + AMP + diphosphate + H(+). Functionally, catalyzes the 2-thiolation of uridine at the wobble position (U34) of tRNA, leading to the formation of s(2)U34. In Psychromonas ingrahamii (strain DSM 17664 / CCUG 51855 / 37), this protein is tRNA-specific 2-thiouridylase MnmA.